Reading from the N-terminus, the 340-residue chain is Gallate dioxygenase (340 aa).

His-45 serves as the catalytic Proton donor. The active-site Proton acceptor is His-113.

Belongs to the LigB/MhpB extradiol dioxygenase family. Fe(2+) is required as a cofactor.

It carries out the reaction 3,4,5-trihydroxybenzoate + O2 = (1E)-4-oxobut-1-ene-1,2,4-tricarboxylate + 2 H(+). In terms of biological role, ring-cleavage dioxygenase that acts specifically on gallate to produce the keto-tautomer of 4-oxalomesaconate. Mediates the first step of gallate degradation pathway. The protein is Gallate dioxygenase (galA) of Pseudomonas putida (strain ATCC 47054 / DSM 6125 / CFBP 8728 / NCIMB 11950 / KT2440).